Here is a 247-residue protein sequence, read N- to C-terminus: UPF0273 protein PH0284 (247 aa).

Residues Arg-3–Leu-247 enclose the KaiC domain. Gly-30–Thr-37 is a binding site for ATP.

Belongs to the UPF0273 family.

This chain is UPF0273 protein PH0284, found in Pyrococcus horikoshii (strain ATCC 700860 / DSM 12428 / JCM 9974 / NBRC 100139 / OT-3).